The primary structure comprises 352 residues: S-adenosylmethionine:tRNA ribosyltransferase-isomerase (352 aa).

Belongs to the QueA family. In terms of assembly, monomer.

The protein localises to the cytoplasm. It carries out the reaction 7-aminomethyl-7-carbaguanosine(34) in tRNA + S-adenosyl-L-methionine = epoxyqueuosine(34) in tRNA + adenine + L-methionine + 2 H(+). It functions in the pathway tRNA modification; tRNA-queuosine biosynthesis. Functionally, transfers and isomerizes the ribose moiety from AdoMet to the 7-aminomethyl group of 7-deazaguanine (preQ1-tRNA) to give epoxyqueuosine (oQ-tRNA). In Vibrio cholerae serotype O1 (strain ATCC 39315 / El Tor Inaba N16961), this protein is S-adenosylmethionine:tRNA ribosyltransferase-isomerase.